A 76-amino-acid chain; its full sequence is Large ribosomal subunit protein uL29 (76 aa).

Belongs to the universal ribosomal protein uL29 family.

In Corynebacterium efficiens (strain DSM 44549 / YS-314 / AJ 12310 / JCM 11189 / NBRC 100395), this protein is Large ribosomal subunit protein uL29.